We begin with the raw amino-acid sequence, 152 residues long: SsrA-binding protein (152 aa).

The protein belongs to the SmpB family.

It is found in the cytoplasm. Functionally, required for rescue of stalled ribosomes mediated by trans-translation. Binds to transfer-messenger RNA (tmRNA), required for stable association of tmRNA with ribosomes. tmRNA and SmpB together mimic tRNA shape, replacing the anticodon stem-loop with SmpB. tmRNA is encoded by the ssrA gene; the 2 termini fold to resemble tRNA(Ala) and it encodes a 'tag peptide', a short internal open reading frame. During trans-translation Ala-aminoacylated tmRNA acts like a tRNA, entering the A-site of stalled ribosomes, displacing the stalled mRNA. The ribosome then switches to translate the ORF on the tmRNA; the nascent peptide is terminated with the 'tag peptide' encoded by the tmRNA and targeted for degradation. The ribosome is freed to recommence translation, which seems to be the essential function of trans-translation. This Rickettsia peacockii (strain Rustic) protein is SsrA-binding protein.